We begin with the raw amino-acid sequence, 76 residues long: DNA-directed RNA polymerase subunit epsilon (76 aa).

Belongs to the RNA polymerase subunit epsilon family. In terms of assembly, RNAP is composed of a core of 2 alpha, a beta and a beta' subunit. The core is associated with a delta subunit, and at least one of epsilon or omega. When a sigma factor is associated with the core the holoenzyme is formed, which can initiate transcription.

It carries out the reaction RNA(n) + a ribonucleoside 5'-triphosphate = RNA(n+1) + diphosphate. Its function is as follows. A non-essential component of RNA polymerase (RNAP). The protein is DNA-directed RNA polymerase subunit epsilon of Streptococcus equi subsp. zooepidemicus (strain H70).